Consider the following 447-residue polypeptide: tRNA threonylcarbamoyladenosine dehydratase 2 (447 aa).

3 consecutive transmembrane segments (helical) span residues 9–29, 86–106, and 294–314; these read LITA…YAWT, NQYV…NSLV, and ILPV…TWIL.

The protein belongs to the HesA/MoeB/ThiF family.

The protein localises to the mitochondrion outer membrane. Functionally, catalyzes the ATP-dependent dehydration of threonylcarbamoyladenosine at position 37 (t(6)A37) to form cyclic t(6)A37 (ct(6)A37) in tRNAs that read codons beginning with adenine. The sequence is that of tRNA threonylcarbamoyladenosine dehydratase 2 (TCD2) from Saccharomyces cerevisiae (strain ATCC 204508 / S288c) (Baker's yeast).